The primary structure comprises 466 residues: Metaxin-1 (466 aa).

Residues 1-19 (MLLGGPPRSPRSGTSPKGP) are compositionally biased toward low complexity. The segment at 1 to 133 (MLLGGPPRSP…AVAGGGPRQG (133 aa)) is disordered. Polar residues predominate over residues 20 to 36 (WSSTGHVQFGKSPQTWP). The segment covering 90 to 110 (ARGPVPRSSAASRARRSLASP) has biased composition (low complexity). Residues K187, K190, K227, and K317 each participate in a glycyl lysine isopeptide (Lys-Gly) (interchain with G-Cter in ubiquitin) cross-link. The chain crosses the membrane as a helical span at residues 421–441 (ILSVLAGLAAMVGYALLSGIV).

The protein belongs to the metaxin family. Interacts with MTX2/metaxin-2. Associates with the mitochondrial contact site and cristae organizing system (MICOS) complex, composed of at least MICOS10/MIC10, CHCHD3/MIC19, CHCHD6/MIC25, APOOL/MIC27, IMMT/MIC60, APOO/MIC23/MIC26 and QIL1/MIC13. This complex was also known under the names MINOS or MitOS complex. The MICOS complex associates with mitochondrial outer membrane proteins SAMM50, MTX1 and MTX2 (together described as components of the mitochondrial outer membrane sorting assembly machinery (SAM) complex) and DNAJC11, mitochondrial inner membrane protein TMEM11 and with HSPA9. The MICOS and SAM complexes together with DNAJC11 are part of a large protein complex spanning both membranes termed the mitochondrial intermembrane space bridging (MIB) complex. Interacts with ARMC1. Ubiquitinated by PRKN during mitophagy, leading to its degradation and enhancement of mitophagy. Deubiquitinated by USP30.

It localises to the membrane. The protein resides in the mitochondrion outer membrane. Functionally, involved in transport of proteins into the mitochondrion. Essential for embryonic development. This is Metaxin-1 (MTX1) from Homo sapiens (Human).